Here is a 341-residue protein sequence, read N- to C-terminus: UDP-3-O-acylglucosamine N-acyltransferase (341 aa).

His-240 functions as the Proton acceptor in the catalytic mechanism.

This sequence belongs to the transferase hexapeptide repeat family. LpxD subfamily. In terms of assembly, homotrimer.

The catalysed reaction is a UDP-3-O-[(3R)-3-hydroxyacyl]-alpha-D-glucosamine + a (3R)-hydroxyacyl-[ACP] = a UDP-2-N,3-O-bis[(3R)-3-hydroxyacyl]-alpha-D-glucosamine + holo-[ACP] + H(+). The protein operates within bacterial outer membrane biogenesis; LPS lipid A biosynthesis. Catalyzes the N-acylation of UDP-3-O-acylglucosamine using 3-hydroxyacyl-ACP as the acyl donor. Is involved in the biosynthesis of lipid A, a phosphorylated glycolipid that anchors the lipopolysaccharide to the outer membrane of the cell. The chain is UDP-3-O-acylglucosamine N-acyltransferase from Cellvibrio japonicus (strain Ueda107) (Pseudomonas fluorescens subsp. cellulosa).